The primary structure comprises 208 residues: ATP-dependent Clp protease proteolytic subunit (208 aa).

The active-site Nucleophile is the Ser-98. His-123 is a catalytic residue.

It belongs to the peptidase S14 family. Fourteen ClpP subunits assemble into 2 heptameric rings which stack back to back to give a disk-like structure with a central cavity, resembling the structure of eukaryotic proteasomes.

It localises to the cytoplasm. The enzyme catalyses Hydrolysis of proteins to small peptides in the presence of ATP and magnesium. alpha-casein is the usual test substrate. In the absence of ATP, only oligopeptides shorter than five residues are hydrolyzed (such as succinyl-Leu-Tyr-|-NHMec, and Leu-Tyr-Leu-|-Tyr-Trp, in which cleavage of the -Tyr-|-Leu- and -Tyr-|-Trp bonds also occurs).. In terms of biological role, cleaves peptides in various proteins in a process that requires ATP hydrolysis. Has a chymotrypsin-like activity. Plays a major role in the degradation of misfolded proteins. The sequence is that of ATP-dependent Clp protease proteolytic subunit from Wolbachia pipientis subsp. Culex pipiens (strain wPip).